Reading from the N-terminus, the 231-residue chain is Large ribosomal subunit protein uL1 (231 aa).

Belongs to the universal ribosomal protein uL1 family. In terms of assembly, part of the 50S ribosomal subunit.

Its function is as follows. Binds directly to 23S rRNA. The L1 stalk is quite mobile in the ribosome, and is involved in E site tRNA release. Functionally, protein L1 is also a translational repressor protein, it controls the translation of the L11 operon by binding to its mRNA. This chain is Large ribosomal subunit protein uL1, found in Buchnera aphidicola subsp. Acyrthosiphon pisum (strain 5A).